The primary structure comprises 345 residues: D-fructose 1,6-bisphosphatase class 2/sedoheptulose 1,7-bisphosphatase (345 aa).

Mn(2+) contacts are provided by Asp-33, Glu-57, Asp-97, and Glu-100. Residues 100–102 (EGT), Tyr-131, 176–178 (RPR), and 198–200 (DGD) contribute to the substrate site. Glu-225 serves as a coordination point for Mn(2+).

Belongs to the FBPase class 2 family. In terms of assembly, homotetramer. Mn(2+) serves as cofactor.

It catalyses the reaction beta-D-fructose 1,6-bisphosphate + H2O = beta-D-fructose 6-phosphate + phosphate. It carries out the reaction D-sedoheptulose 1,7-bisphosphate + H2O = D-sedoheptulose 7-phosphate + phosphate. The protein operates within carbohydrate biosynthesis; Calvin cycle. Its function is as follows. Catalyzes the hydrolysis of fructose 1,6-bisphosphate (Fru 1,6-P2) and sedoheptulose 1,7-bisphosphate (Sed 1,7-P2) to fructose 6-phosphate and sedoheptulose 7-phosphate, respectively. The chain is D-fructose 1,6-bisphosphatase class 2/sedoheptulose 1,7-bisphosphatase from Trichodesmium erythraeum (strain IMS101).